The following is a 404-amino-acid chain: Phosphopentomutase (404 aa).

Mn(2+) is bound by residues D10, D303, H308, D344, H345, and H356.

Belongs to the phosphopentomutase family. It depends on Mn(2+) as a cofactor.

The protein localises to the cytoplasm. The enzyme catalyses 2-deoxy-alpha-D-ribose 1-phosphate = 2-deoxy-D-ribose 5-phosphate. The catalysed reaction is alpha-D-ribose 1-phosphate = D-ribose 5-phosphate. Its pathway is carbohydrate degradation; 2-deoxy-D-ribose 1-phosphate degradation; D-glyceraldehyde 3-phosphate and acetaldehyde from 2-deoxy-alpha-D-ribose 1-phosphate: step 1/2. Its function is as follows. Isomerase that catalyzes the conversion of deoxy-ribose 1-phosphate (dRib-1-P) and ribose 1-phosphate (Rib-1-P) to deoxy-ribose 5-phosphate (dRib-5-P) and ribose 5-phosphate (Rib-5-P), respectively. The chain is Phosphopentomutase from Shewanella sp. (strain MR-4).